The sequence spans 293 residues: ATP synthase subunit gamma, mitochondrial (293 aa).

Residues 1 to 21 (MFALRTAARPAARSVGATRNY) constitute a mitochondrion transit peptide.

As to quaternary structure, F-type ATP synthases have 2 components, the catalytic core F(1) and the membrane-embedded component F(0), linked together by a central stalk and a peripheral stalk. The central stalk, also called rotor shaft, is often seen as part of F(1). The peripheral stalk is seen as part of F(0). F(0) contains the membrane channel next to the rotor. F-type ATP synthases form dimers but each monomer functions independently in ATP generation. The dimer consists of 17 different polypeptides: ATP1 (subunit alpha, 3 molecules per monomer, part of F(1)), ATP2 (subunit beta, 3 copies per monomer, part of F(1)), ATP3 (subunit gamma, part of the central stalk), ATP4 (subunit b, part of the peripheral stalk), ATP5/OSCP (subunit 5/OSCP, part of the peripheral stalk), ATP6 (subunit a, part of the peripheral stalk), ATP7 (subunit d, part of the peripheral stalk), ATP8 (subunit 8, part of the peripheral stalk), OLI1 (subunit c, part of the rotor, 10 molecules per monomer), ATP14 (subunit h, part of the peripheral stalk), ATP15 (subunit epsilon, part of the central stalk), ATP16 (subunit delta, part of the central stalk), ATP17 (subunit f, part of the peripheral stalk), ATP18 (subunit i/j, part of the peripheral stalk), ATP19 (subunit k, dimer-specific, at interface between monomers), ATP20 (subunit g, at interface between monomers), TIM11 (subunit e, at interface between monomers).

It is found in the mitochondrion inner membrane. Its function is as follows. Mitochondrial membrane ATP synthase (F(1)F(0) ATP synthase or Complex V) produces ATP from ADP in the presence of a proton gradient across the membrane which is generated by electron transport complexes of the respiratory chain. F-type ATP synthases consist of two structural domains, F(1) - containing the extramembraneous catalytic core, and F(0) - containing the membrane proton channel, linked together by a central stalk and a peripheral stalk. During catalysis, ATP synthesis in the catalytic domain of F(1) is coupled via a rotary mechanism of the central stalk subunits to proton translocation. Part of the complex F(1) domain and the central stalk which is part of the complex rotary element. The gamma/ATP3 subunit protrudes into the catalytic domain formed of alpha/ATP1(3)beta/ATP2(3). Rotation of the central stalk against the surrounding alpha/ATP1(3)beta/ATP2(3) subunits leads to hydrolysis of ATP in three separate catalytic sites on the beta/ATP2 subunits. In Yarrowia lipolytica (strain CLIB 122 / E 150) (Yeast), this protein is ATP synthase subunit gamma, mitochondrial.